The following is a 331-amino-acid chain: MFFWYQNHVIAKLLVWLLFPFSLVFWFISVIRRRLFRLNWLKSYRSPVPVLIVGNLSVGGNGKTPVTIWLVKQFQSRGIKVGVISRGYGSRAEYYPYLVKIDDNPTISGDEPLLIAQRTGVPVCISPNRQQAIELLLAQFNCDLIISDDGLQHYKLQRDFEIVVIDGERVFGNGFVMPAGPLRELPNRLAEVDLIINNGKLTGYSNTLMLLLPKFAVNLVSGEKKLLRDFQRIPLNAIAGIGYPQRFFNMLRDFALTLEKTQSFQDHQDFDAVHFSYFSSNQPLFMTEKDAVKCRPFAQANWWYVPVEADIQGEEVERFMQVVSQQIKEKK.

Serine 57–threonine 64 serves as a coordination point for ATP.

The protein belongs to the LpxK family.

The enzyme catalyses a lipid A disaccharide + ATP = a lipid IVA + ADP + H(+). The protein operates within glycolipid biosynthesis; lipid IV(A) biosynthesis; lipid IV(A) from (3R)-3-hydroxytetradecanoyl-[acyl-carrier-protein] and UDP-N-acetyl-alpha-D-glucosamine: step 6/6. Functionally, transfers the gamma-phosphate of ATP to the 4'-position of a tetraacyldisaccharide 1-phosphate intermediate (termed DS-1-P) to form tetraacyldisaccharide 1,4'-bis-phosphate (lipid IVA). The sequence is that of Tetraacyldisaccharide 4'-kinase from Histophilus somni (strain 2336) (Haemophilus somnus).